The following is a 417-amino-acid chain: Mitochondrial inner membrane i-AAA protease supercomplex subunit MGR1 (417 aa).

Residues 1–28 (MAVFTPPSGNSNSTDHTHTQDDHDKDDN) form a disordered region. Residues 1–56 (MAVFTPPSGNSNSTDHTHTQDDHDKDDNDIKKFYIRPSLGLKLWGPLVPAPDNLPG) lie on the Mitochondrial intermembrane side of the membrane. Over residues 15–28 (DHTHTQDDHDKDDN) the composition is skewed to basic and acidic residues. Residues 57–73 (LYTLITIQSAVGFFALW) form a helical membrane-spanning segment. The Mitochondrial matrix segment spans residues 74–151 (RLRRLYKLPP…RQSRFVSVRK (78 aa)). The chain crosses the membrane as a helical span at residues 152–169 (LLWGLFGSLLLSQSLLEL). Topologically, residues 170 to 417 (TRLNFLKYDP…PKALTNEKTH (248 aa)) are mitochondrial intermembrane. Polar residues predominate over residues 391-401 (SHTKTPTSTDQ). The interval 391 to 417 (SHTKTPTSTDQPLPGPTPKALTNEKTH) is disordered.

The protein belongs to the MGR1 family. Component of the mitochondrial inner membrane i-AAA protease supercomplex composed of MGR1, MGR3 and YME1. With MGR3, forms a subcomplex that binds to YME1 and to substrates to facilitate proteolysis. Interacts directly with YME1.

It localises to the mitochondrion inner membrane. Its function is as follows. Component of the mitochondrial inner membrane i-AAA protease supercomplex required for mitochondrial inner membrane protein turnover. Together with MGR3, functions in an adapter complex that targets substrates to the i-AAA protease for degradation. Required for growth of cells lacking the mitochondrial genome. The protein is Mitochondrial inner membrane i-AAA protease supercomplex subunit MGR1 (MGR1) of Saccharomyces cerevisiae (strain ATCC 204508 / S288c) (Baker's yeast).